A 551-amino-acid polypeptide reads, in one-letter code: Putative ABC transporter ATP-binding protein BA_3364/GBAA_3364/BAS3118 (551 aa).

ABC transporter domains are found at residues 5–243 and 293–525; these read AEIK…FRPF and LSAE…SINR. ATP contacts are provided by residues 39–46 and 327–334; these read GGSGSGKT and GKNGTGKS.

This sequence belongs to the ABC transporter superfamily.

The protein resides in the cell membrane. Probably part of an ABC transporter complex. Responsible for energy coupling to the transport system. The protein is Putative ABC transporter ATP-binding protein BA_3364/GBAA_3364/BAS3118 of Bacillus anthracis.